Here is a 4239-residue protein sequence, read N- to C-terminus: Tenellin synthetase (4239 aa).

In terms of domain architecture, Ketosynthase family 3 (KS3) spans 15–454; sequence SEPIAIIGSA…GTNAHAIIER (440 aa). Catalysis depends on for beta-ketoacyl synthase activity residues Cys-189, His-326, and His-374. The tract at residues 589–923 is malonyl-CoA:ACP transacylase (MAT) domain; the sequence is VFTGQGAQWP…ANDAVAFSTA (335 aa). The interval 993–1135 is N-terminal hotdog fold; sequence HELLGRRTPD…GRIAVQLGAK (143 aa). The tract at residues 993–1310 is dehydratase (DH) domain; it reads HELLGRRTPD…GFEVRAVGEP (318 aa). Positions 993 to 1313 constitute a PKS/mFAS DH domain; it reads HELLGRRTPD…VRAVGEPDAS (321 aa). The active-site Proton acceptor; for dehydratase activity is His-1025. The interval 1158–1313 is C-terminal hotdog fold; it reads LQQLDCEKLY…VRAVGEPDAS (156 aa). The active-site Proton donor; for dehydratase activity is Asp-1217. Residues 1459 to 1652 are methyltransferase (MT) domain; sequence RLYTEDKGMH…FSGVDHIVHD (194 aa). The ketoreductase (KR) domain stretch occupies residues 2209–2382; the sequence is TYLMVGAAGG…AASIIHVGHV (174 aa). The Carrier 1 domain maps to 2502-2582; that stretch reads EAAVAALKGF…QLSALAAKLA (81 aa). The residue at position 2542 (Ser-2542) is an O-(pantetheine 4'-phosphoryl)serine. 2 disordered regions span residues 2587-2629 and 2642-2712; these read KKRA…EIAQ and LEAS…FFTQ. Polar residues-rich tracts occupy residues 2648 to 2662 and 2670 to 2681; these read GGSSTANLTTSSSVS and ESTLQSSDNNGE. Over residues 2682–2698 the composition is skewed to low complexity; sequence STPSKSSNCNSDSGSDN. Positions 2723–3169 are condensation (C) domain; it reads REAPMSPAQS…SAQSVGDCVV (447 aa). The interval 3203 to 3614 is adenylation (A) (KR) domain; sequence CQQHSTKSAI…DGTLLCFGRI (412 aa). The disordered stretch occupies residues 3728-3752; that stretch reads EAAAATSPSNNNINNNTPSGGGGEK. The segment covering 3729-3745 has biased composition (low complexity); sequence AAAATSPSNNNINNNTP. The 85-residue stretch at 3751-3835 folds into the Carrier 2 domain; it reads EKMTVRQGEL…GMARCVAEQR (85 aa). Ser-3795 carries the O-(pantetheine 4'-phosphoryl)serine modification. Residues 3862-3892 are disordered; that stretch reads EKLQHSSASSSSSSSSSSSAGSSSTQRPRKT. The span at 3867-3885 shows a compositional bias: low complexity; the sequence is SSASSSSSSSSSSSAGSSS. The interval 3899 to 4145 is reductase (RED) domain; that stretch reads LTGATGFLGG…LDFGQVDKVV (247 aa).

The protein in the C-terminal section; belongs to the NRP synthetase family.

Its pathway is secondary metabolite biosynthesis. In terms of biological role, hybrid PKS-NRPS synthetase; part of the gene cluster that mediates the biosynthesis of tenellin-type 2-pyridones, iron-chelating compounds involved in iron stress tolerance, competition with the natural competitor fungus Metarhizium robertsii and insect hosts infection. TenS catalyzes the assembly of the polyketide-amino acid backbone. Because tenS lacks a designated enoylreductase (ER) domain, the required activity is provided the enoyl reductase tenC. Upon formation of the polyketide backbone on the thiotemplate, the triketide is transferred to the NRPS module and linked to tyrosine to produce the pyrrolidine-2-dione intermediates, including pretellinin A, 11-hydropretellenin A, 12-hydropretellenin A, 13-hydropretellenin A, 14-hydropretellenin A, 12-oxopretellenin A and prototellinin D. The pathway begins with the assembly of the polyketide-amino acid backbone by the hybrid PKS-NRPS tenS with the help of the enoyl reductase tenC. These enzymes catalyze the synthesis of the pyrrolidine-2-dione intermediates pretellinin A, 11-hydropretellenin A, 12-hydropretellenin A, 13-hydropretellenin A, 14-hydropretellenin A, 12-oxopretellenin A and prototellinin D. The cytochrome P450 monooxygenase tenA then catalyzes an oxidative ring expansion of pretenellin A and 14-hydropretellenin A to form the 2-pyridone core, leading to pretenellin B and pyridovericin, respectively. The cytochrome P450 monooxygenase tenB is then required for the selective N-hydroxylation of the 2-pyridone nitrogen of yield tellinin and 15-hydroxytellenin (15-HT), respectively. The UDP-glucosyltransferase GT1 and the methyltransferase MT1, located outside the tenS gene cluster, contribute to the stepwise glycosylation and methylation of 15-HT to obtain the glycoside pyridovericin-N-O-(4-O-methyl-beta-D-glucopyranoside) (PMGP). Additional related compounds such as 1-O-methyl-15-HT, (8Z)-1-O-methyl-15-HT, and O-methyltenellin A are also produced but the enzymes involved in their biosynthesis have still to be determined. This Beauveria bassiana (White muscardine disease fungus) protein is Tenellin synthetase.